Consider the following 168-residue polypeptide: Nicotinamide-nucleotide adenylyltransferase (168 aa).

ATP-binding residues include R8, F9, H13, H16, F119, R121, Y124, G126, T127, and R130.

Belongs to the archaeal NMN adenylyltransferase family. Homohexamer existing as a trimer of dimers.

It is found in the cytoplasm. It catalyses the reaction beta-nicotinamide D-ribonucleotide + ATP + H(+) = diphosphate + NAD(+). Its pathway is cofactor biosynthesis; NAD(+) biosynthesis; NAD(+) from nicotinamide D-ribonucleotide: step 1/1. In terms of biological role, catalyzes the formation of NAD(+) from nicotinamide mononucleotide (NMN) and ATP. The protein is Nicotinamide-nucleotide adenylyltransferase of Methanocaldococcus jannaschii (strain ATCC 43067 / DSM 2661 / JAL-1 / JCM 10045 / NBRC 100440) (Methanococcus jannaschii).